The primary structure comprises 352 residues: Biotin synthase (352 aa).

Residues 44 to 262 (NRVQVSTLLS…LAVARIMMPK (219 aa)) enclose the Radical SAM core domain. [4Fe-4S] cluster is bound by residues Cys59, Cys63, and Cys66. 4 residues coordinate [2Fe-2S] cluster: Cys103, Cys134, Cys194, and Arg266.

It belongs to the radical SAM superfamily. Biotin synthase family. As to quaternary structure, homodimer. [4Fe-4S] cluster is required as a cofactor. The cofactor is [2Fe-2S] cluster.

It carries out the reaction (4R,5S)-dethiobiotin + (sulfur carrier)-SH + 2 reduced [2Fe-2S]-[ferredoxin] + 2 S-adenosyl-L-methionine = (sulfur carrier)-H + biotin + 2 5'-deoxyadenosine + 2 L-methionine + 2 oxidized [2Fe-2S]-[ferredoxin]. It functions in the pathway cofactor biosynthesis; biotin biosynthesis; biotin from 7,8-diaminononanoate: step 2/2. Functionally, catalyzes the conversion of dethiobiotin (DTB) to biotin by the insertion of a sulfur atom into dethiobiotin via a radical-based mechanism. In Ectopseudomonas mendocina (strain ymp) (Pseudomonas mendocina), this protein is Biotin synthase.